Here is a 380-residue protein sequence, read N- to C-terminus: Chaperone protein DnaJ (380 aa).

In terms of domain architecture, J spans 4–69; it reads DYYEILGVTR…QKRAAYDRFG (66 aa). The CR-type zinc finger occupies 135-213; the sequence is GKTAQINIPS…CQGTRRVEKN (79 aa). The Zn(2+) site is built by Cys148, Cys151, Cys165, Cys168, Cys187, Cys190, Cys201, and Cys204. CXXCXGXG motif repeat units follow at residues 148 to 155, 165 to 172, 187 to 194, and 201 to 208; these read CDSCEGSG, CGTCHGAG, CHACNGRG, and CPKCQGTR.

The protein belongs to the DnaJ family. Homodimer. Zn(2+) is required as a cofactor.

Its subcellular location is the cytoplasm. Functionally, participates actively in the response to hyperosmotic and heat shock by preventing the aggregation of stress-denatured proteins and by disaggregating proteins, also in an autonomous, DnaK-independent fashion. Unfolded proteins bind initially to DnaJ; upon interaction with the DnaJ-bound protein, DnaK hydrolyzes its bound ATP, resulting in the formation of a stable complex. GrpE releases ADP from DnaK; ATP binding to DnaK triggers the release of the substrate protein, thus completing the reaction cycle. Several rounds of ATP-dependent interactions between DnaJ, DnaK and GrpE are required for fully efficient folding. Also involved, together with DnaK and GrpE, in the DNA replication of plasmids through activation of initiation proteins. The chain is Chaperone protein DnaJ from Bartonella quintana (strain Toulouse) (Rochalimaea quintana).